Here is a 155-residue protein sequence, read N- to C-terminus: Protein E6 (155 aa).

Zinc fingers lie at residues 33-69 (CVYC…CRVC) and 106-142 (CYRC…CLGC).

Belongs to the papillomaviridae E6 protein family. As to quaternary structure, forms homodimers. Interacts with ubiquitin-protein ligase UBE3A/E6-AP; this interaction stimulates UBE3A ubiquitin activity. Interacts with host TP53 and EP300; this interaction inhibits TP53 activity.

Its subcellular location is the host cytoplasm. The protein resides in the host nucleus. In terms of biological role, this protein has transforming activity in vitro. Plays a major role in the induction and maintenance of cellular transformation. E6 associates with host UBE3A/E6-AP ubiquitin-protein ligase and modulates its activity. Sequesters tumor suppressor TP53 in the host cytoplasm and modulates its activity by interacting with host EP300 that results in the reduction of TP53 acetylation and activation. In turn, apoptosis induced by DNA damage is inhibited. E6 also protects host keratinocytes from apoptosis by mediating the degradation of host BAK1. May also inhibit host immune response. This is Protein E6 from Human papillomavirus 56.